The following is a 57-amino-acid chain: Large ribosomal subunit protein bL32 (57 aa).

Belongs to the bacterial ribosomal protein bL32 family.

This is Large ribosomal subunit protein bL32 from Halothermothrix orenii (strain H 168 / OCM 544 / DSM 9562).